Consider the following 183-residue polypeptide: Potassium-transporting ATPase KdpC subunit (183 aa).

A helical membrane pass occupies residues 11-31 (LILLLAVVTGALYPLAVTGVA).

Belongs to the KdpC family. As to quaternary structure, the system is composed of three essential subunits: KdpA, KdpB and KdpC.

The protein resides in the cell inner membrane. In terms of biological role, part of the high-affinity ATP-driven potassium transport (or Kdp) system, which catalyzes the hydrolysis of ATP coupled with the electrogenic transport of potassium into the cytoplasm. This subunit acts as a catalytic chaperone that increases the ATP-binding affinity of the ATP-hydrolyzing subunit KdpB by the formation of a transient KdpB/KdpC/ATP ternary complex. In Pseudomonas putida (strain W619), this protein is Potassium-transporting ATPase KdpC subunit.